A 130-amino-acid polypeptide reads, in one-letter code: Encapsulin nanocompartment cargo protein EncC (130 aa).

Positions 31, 61, and 64 each coordinate Fe cation. Positions 61–64 (EREH) match the Di-iron-binding motif motif. The disordered stretch occupies residues 103 to 130 (EAVGKEGAAPSPADVTPEKRLTVGSLRR). Residues 123-130 (LTVGSLRR) are probable targeting peptide.

Belongs to the ferritin-like superfamily.

Its subcellular location is the encapsulin nanocompartment. Functionally, cargo protein of a type 1 encapsulin nanocompartment. May help nucleate Fe atoms in the interior of the encapsulin nanocompartment. Present in about 92 copies/encapsulin nanocompartment. This is Encapsulin nanocompartment cargo protein EncC from Myxococcus xanthus (strain DK1622).